The following is a 178-amino-acid chain: Endoribonuclease YbeY (178 aa).

Positions 118, 122, and 128 each coordinate Zn(2+). The interval Ala-158 to Pro-178 is disordered.

The protein belongs to the endoribonuclease YbeY family. Zn(2+) is required as a cofactor.

It localises to the cytoplasm. Functionally, single strand-specific metallo-endoribonuclease involved in late-stage 70S ribosome quality control and in maturation of the 3' terminus of the 16S rRNA. This Mycolicibacterium smegmatis (strain ATCC 700084 / mc(2)155) (Mycobacterium smegmatis) protein is Endoribonuclease YbeY.